A 206-amino-acid polypeptide reads, in one-letter code: GDT1-like protein sll0615 (206 aa).

Helical transmembrane passes span 36–56 (WVLV…VLMG), 58–78 (IFTF…FLIF), 114–134 (IVPR…VAEW), 151–171 (AWGV…IAVM), and 185–205 (VTLI…WTKI).

This sequence belongs to the GDT1 family.

Its subcellular location is the cell membrane. The protein is GDT1-like protein sll0615 of Synechocystis sp. (strain ATCC 27184 / PCC 6803 / Kazusa).